A 396-amino-acid chain; its full sequence is Elongation factor Tu 1 (396 aa).

The tr-type G domain maps to 10-206 (KPHINVGTIG…VLDSYIPEPQ (197 aa)). The G1 stretch occupies residues 19 to 26 (GHVDHGKT). Residue 19–26 (GHVDHGKT) participates in GTP binding. Threonine 26 provides a ligand contact to Mg(2+). Residues 60–64 (GITIN) form a G2 region. The interval 81 to 84 (DCPG) is G3. GTP is bound by residues 81–85 (DCPGH) and 136–139 (NKAD). The interval 136-139 (NKAD) is G4. The G5 stretch occupies residues 174 to 176 (SAL).

This sequence belongs to the TRAFAC class translation factor GTPase superfamily. Classic translation factor GTPase family. EF-Tu/EF-1A subfamily. Monomer.

Its subcellular location is the cytoplasm. It catalyses the reaction GTP + H2O = GDP + phosphate + H(+). GTP hydrolase that promotes the GTP-dependent binding of aminoacyl-tRNA to the A-site of ribosomes during protein biosynthesis. In Nitrosomonas eutropha (strain DSM 101675 / C91 / Nm57), this protein is Elongation factor Tu 1.